A 273-amino-acid chain; its full sequence is Peptidyl-prolyl cis-trans isomerase E (273 aa).

In terms of domain architecture, RRM spans 1 to 48; the sequence is MPMDYQTEKHRGFAFVEFEEVEDAMSAIDNMNESEIFGRTIRVNVARP. A disordered region spans residues 77-103; it reads RKLDEPDIVNPSDTSENVEDLSDEEMR. The PPIase cyclophilin-type domain occupies 115–271; it reads FFDIRIGNGD…EPVIISRCGE (157 aa).

This sequence belongs to the cyclophilin-type PPIase family. PPIase E subfamily.

It is found in the cytoplasm. It catalyses the reaction [protein]-peptidylproline (omega=180) = [protein]-peptidylproline (omega=0). Its activity is regulated as follows. Binds cyclosporin A (CsA). CsA mediates some of its effects via an inhibitory action on PPIase. Functionally, PPIases accelerate the folding of proteins. It catalyzes the cis-trans isomerization of proline imidic peptide bonds in oligopeptides. The chain is Peptidyl-prolyl cis-trans isomerase E from Schistosoma mansoni (Blood fluke).